The primary structure comprises 223 residues: Urease accessory protein UreF (223 aa).

This sequence belongs to the UreF family. As to quaternary structure, ureD, UreF and UreG form a complex that acts as a GTP-hydrolysis-dependent molecular chaperone, activating the urease apoprotein by helping to assemble the nickel containing metallocenter of UreC. The UreE protein probably delivers the nickel.

Its subcellular location is the cytoplasm. Required for maturation of urease via the functional incorporation of the urease nickel metallocenter. This is Urease accessory protein UreF from Pseudomonas aeruginosa (strain LESB58).